The sequence spans 358 residues: Alanine racemase (358 aa).

The active-site Proton acceptor; specific for D-alanine is the Lys35. At Lys35 the chain carries N6-(pyridoxal phosphate)lysine. Position 131 (Arg131) interacts with substrate. Tyr253 acts as the Proton acceptor; specific for L-alanine in catalysis. Met301 provides a ligand contact to substrate.

It belongs to the alanine racemase family. Pyridoxal 5'-phosphate is required as a cofactor.

The catalysed reaction is L-alanine = D-alanine. The protein operates within amino-acid biosynthesis; D-alanine biosynthesis; D-alanine from L-alanine: step 1/1. In terms of biological role, catalyzes the interconversion of L-alanine and D-alanine. May also act on other amino acids. The protein is Alanine racemase (alr) of Alteromonas mediterranea (strain DSM 17117 / CIP 110805 / LMG 28347 / Deep ecotype).